A 317-amino-acid polypeptide reads, in one-letter code: Non-structural protein 2 (317 aa).

Residues 107–109 (SIR), Lys-188, and 221–223 (HGK) contribute to the ATP site. Residues 205-241 (LVAELRWQYNKFAVITHGKGHYRIVKYSSVANHADRV) form an RNA-binding region. Catalysis depends on His-225, which acts as the For NTPase and RTPase activities. Arg-227 is an ATP binding site.

This sequence belongs to the rotavirus NSP2 family. In terms of assembly, homooctamer. Interacts with VP1; this interaction is weak. Interacts with NSP5; this interaction leads to up-regulation of NSP5 phosphorylation and formation of viral factories. Interacts with host DCP1A, DCP1B, DDX6, EDC4 and EIF2S1/eIF2-alpha; these interactions are probably part of the sequestration of some host SGs and PBs proteins in viral factories. The cofactor is Mg(2+).

Its subcellular location is the host cytoplasm. Participates in replication and packaging of the viral genome. Plays a crucial role, together with NSP5, in the formation of virus factories (viroplasms), which are large inclusions in the host cytoplasm where replication intermediates are assembled and viral RNA replication takes place. Displays ssRNA binding, NTPase, RNA triphosphatase (RTPase) and ATP-independent helix-unwinding activities. The unwinding activity may prepare and organize plus-strand RNAs for packaging and replication by removing interfering secondary structures. The RTPase activity plays a role in the removal of the gamma-phosphate from the rotavirus RNA minus strands of dsRNA genome segments. Participates in the selective exclusion of host proteins from stress granules (SG) and P bodies (PB). Also participates in the sequestration of these remodeled organelles in viral factories. This chain is Non-structural protein 2, found in Rotavirus A (strain RVA/SA11-Patton/G3P[X]) (RV-A).